The following is a 337-amino-acid chain: Holliday junction branch migration complex subunit RuvB (337 aa).

Residues 4–184 are large ATPase domain (RuvB-L); it reads ADRLIQPQVL…FGIPLRLEFY (181 aa). ATP-binding positions include Arg-24, Gly-65, Lys-68, Thr-69, Thr-70, 131–133, Arg-174, Tyr-184, and Arg-221; that span reads EDY. Thr-69 contributes to the Mg(2+) binding site. The interval 185–255 is small ATPAse domain (RuvB-S); sequence NVKDLCTIVT…VAQQALDMLD (71 aa). Residues 258 to 337 are head domain (RuvB-H); the sequence is QEGFDYLDRK…FNIITPDVPK (80 aa). 3 residues coordinate DNA: Arg-294, Arg-313, and Arg-318.

The protein belongs to the RuvB family. Homohexamer. Forms an RuvA(8)-RuvB(12)-Holliday junction (HJ) complex. HJ DNA is sandwiched between 2 RuvA tetramers; dsDNA enters through RuvA and exits via RuvB. An RuvB hexamer assembles on each DNA strand where it exits the tetramer. Each RuvB hexamer is contacted by two RuvA subunits (via domain III) on 2 adjacent RuvB subunits; this complex drives branch migration. In the full resolvosome a probable DNA-RuvA(4)-RuvB(12)-RuvC(2) complex forms which resolves the HJ.

It localises to the cytoplasm. It carries out the reaction ATP + H2O = ADP + phosphate + H(+). Its function is as follows. The RuvA-RuvB-RuvC complex processes Holliday junction (HJ) DNA during genetic recombination and DNA repair, while the RuvA-RuvB complex plays an important role in the rescue of blocked DNA replication forks via replication fork reversal (RFR). RuvA specifically binds to HJ cruciform DNA, conferring on it an open structure. The RuvB hexamer acts as an ATP-dependent pump, pulling dsDNA into and through the RuvAB complex. RuvB forms 2 homohexamers on either side of HJ DNA bound by 1 or 2 RuvA tetramers; 4 subunits per hexamer contact DNA at a time. Coordinated motions by a converter formed by DNA-disengaged RuvB subunits stimulates ATP hydrolysis and nucleotide exchange. Immobilization of the converter enables RuvB to convert the ATP-contained energy into a lever motion, pulling 2 nucleotides of DNA out of the RuvA tetramer per ATP hydrolyzed, thus driving DNA branch migration. The RuvB motors rotate together with the DNA substrate, which together with the progressing nucleotide cycle form the mechanistic basis for DNA recombination by continuous HJ branch migration. Branch migration allows RuvC to scan DNA until it finds its consensus sequence, where it cleaves and resolves cruciform DNA. This chain is Holliday junction branch migration complex subunit RuvB, found in Shewanella denitrificans (strain OS217 / ATCC BAA-1090 / DSM 15013).